A 511-amino-acid chain; its full sequence is Serine/threonine-protein kinase Nek3 (511 aa).

Met1 carries the post-translational modification N-acetylmethionine. Residues Met1–Ser282 are interaction with VAV2. In terms of domain architecture, Protein kinase spans Tyr4–Leu255. ATP-binding positions include Ile10–Ala18 and Lys33. Residue Asp125 is the Proton acceptor of the active site. Position 159 is a phosphothreonine; by autocatalysis (Thr159). Disordered stretches follow at residues Leu299–Ser370 and Gly443–Ala511. The span at Glu309 to Leu321 shows a compositional bias: basic and acidic residues. The segment covering Leu472 to Asn485 has biased composition (acidic residues). At Thr477 the chain carries Phosphothreonine. The span at Tyr498–Ala511 shows a compositional bias: gly residues.

This sequence belongs to the protein kinase superfamily. NEK Ser/Thr protein kinase family. NIMA subfamily. In terms of assembly, interacts with PXN, PRLR, VAV1 and VAV2 and this interaction is prolactin-dependent. Mg(2+) is required as a cofactor. In terms of processing, phosphorylation at Thr-477 regulates its catalytic activity. As to expression, brain.

The protein resides in the cytoplasm. It is found in the cell projection. It localises to the axon. The enzyme catalyses L-seryl-[protein] + ATP = O-phospho-L-seryl-[protein] + ADP + H(+). It catalyses the reaction L-threonyl-[protein] + ATP = O-phospho-L-threonyl-[protein] + ADP + H(+). Protein kinase which influences neuronal morphogenesis and polarity through effects on microtubules. Regulates microtubule acetylation in neurons. Contributes to prolactin-mediated phosphorylation of PXN and VAV2. The polypeptide is Serine/threonine-protein kinase Nek3 (Nek3) (Mus musculus (Mouse)).